A 259-amino-acid polypeptide reads, in one-letter code: Small ribosomal subunit protein uS2 (259 aa).

A disordered region spans residues 228–259 (VSFGSEEAEENNQKEDNEEIFEIEDVDESEEM). Positions 233–259 (EEAEENNQKEDNEEIFEIEDVDESEEM) are enriched in acidic residues.

The protein belongs to the universal ribosomal protein uS2 family.

The protein is Small ribosomal subunit protein uS2 of Thermosipho africanus (strain TCF52B).